The primary structure comprises 355 residues: Phosphoribosylformylglycinamidine cyclo-ligase (355 aa).

The protein belongs to the AIR synthase family.

Its subcellular location is the cytoplasm. The enzyme catalyses 2-formamido-N(1)-(5-O-phospho-beta-D-ribosyl)acetamidine + ATP = 5-amino-1-(5-phospho-beta-D-ribosyl)imidazole + ADP + phosphate + H(+). It functions in the pathway purine metabolism; IMP biosynthesis via de novo pathway; 5-amino-1-(5-phospho-D-ribosyl)imidazole from N(2)-formyl-N(1)-(5-phospho-D-ribosyl)glycinamide: step 2/2. The polypeptide is Phosphoribosylformylglycinamidine cyclo-ligase (Paraburkholderia phytofirmans (strain DSM 17436 / LMG 22146 / PsJN) (Burkholderia phytofirmans)).